We begin with the raw amino-acid sequence, 205 residues long: Probable nicotinate-nucleotide adenylyltransferase (205 aa).

The protein belongs to the NadD family.

It catalyses the reaction nicotinate beta-D-ribonucleotide + ATP + H(+) = deamido-NAD(+) + diphosphate. Its pathway is cofactor biosynthesis; NAD(+) biosynthesis; deamido-NAD(+) from nicotinate D-ribonucleotide: step 1/1. In terms of biological role, catalyzes the reversible adenylation of nicotinate mononucleotide (NaMN) to nicotinic acid adenine dinucleotide (NaAD). The protein is Probable nicotinate-nucleotide adenylyltransferase of Arthrobacter sp. (strain FB24).